The sequence spans 295 residues: Bifunctional protein FolD (295 aa).

NADP(+) is bound by residues 166–168 (GRS), Ser191, and Ile232.

Belongs to the tetrahydrofolate dehydrogenase/cyclohydrolase family. In terms of assembly, homodimer.

The catalysed reaction is (6R)-5,10-methylene-5,6,7,8-tetrahydrofolate + NADP(+) = (6R)-5,10-methenyltetrahydrofolate + NADPH. The enzyme catalyses (6R)-5,10-methenyltetrahydrofolate + H2O = (6R)-10-formyltetrahydrofolate + H(+). It functions in the pathway one-carbon metabolism; tetrahydrofolate interconversion. Its function is as follows. Catalyzes the oxidation of 5,10-methylenetetrahydrofolate to 5,10-methenyltetrahydrofolate and then the hydrolysis of 5,10-methenyltetrahydrofolate to 10-formyltetrahydrofolate. The sequence is that of Bifunctional protein FolD from Rhodopseudomonas palustris (strain ATCC BAA-98 / CGA009).